Consider the following 324-residue polypeptide: Serine carboxypeptidase II-1 (324 aa).

An N-linked (GlcNAc...) asparagine glycan is attached at N10. S41 is an active-site residue. Cystine bridges form between C109–C121 and C145–C170. Positions 150–162 are cleaved as a propeptide — linker peptide; it reads LHRRRLIKGRRPW. N-linked (GlcNAc...) asparagine glycosylation occurs at N191. Residues D239 and H291 contribute to the active site.

The protein belongs to the peptidase S10 family. Carboxypeptidase II is a dimer, where each monomer is composed of two chains linked by a disulfide bond. Post-translationally, the linker peptide is endoproteolytically excised during enzyme maturation.

The catalysed reaction is Preferential release of a C-terminal arginine or lysine residue.. This chain is Serine carboxypeptidase II-1 (CXP;2-1), found in Hordeum vulgare (Barley).